The sequence spans 160 residues: Cyclic pyranopterin monophosphate synthase (160 aa).

Substrate is bound by residues 76-78 (LCH) and 114-115 (ME). Aspartate 129 is a catalytic residue.

It belongs to the MoaC family. As to quaternary structure, homohexamer; trimer of dimers.

The catalysed reaction is (8S)-3',8-cyclo-7,8-dihydroguanosine 5'-triphosphate = cyclic pyranopterin phosphate + diphosphate. It participates in cofactor biosynthesis; molybdopterin biosynthesis. Its function is as follows. Catalyzes the conversion of (8S)-3',8-cyclo-7,8-dihydroguanosine 5'-triphosphate to cyclic pyranopterin monophosphate (cPMP). The protein is Cyclic pyranopterin monophosphate synthase of Mesorhizobium japonicum (strain LMG 29417 / CECT 9101 / MAFF 303099) (Mesorhizobium loti (strain MAFF 303099)).